Reading from the N-terminus, the 216-residue chain is 3-keto-L-gulonate-6-phosphate decarboxylase UlaD (216 aa).

A substrate-binding site is contributed by aspartate 11. Mg(2+) is bound by residues glutamate 33 and aspartate 62. Arginine 192 is a substrate binding site.

It belongs to the HPS/KGPDC family. KGPDC subfamily. As to quaternary structure, homodimer. The cofactor is Mg(2+).

It catalyses the reaction 3-dehydro-L-gulonate 6-phosphate + H(+) = L-xylulose 5-phosphate + CO2. The protein operates within cofactor degradation; L-ascorbate degradation; D-xylulose 5-phosphate from L-ascorbate: step 2/4. In terms of biological role, catalyzes the decarboxylation of 3-keto-L-gulonate-6-P into L-xylulose-5-P. Is involved in the anaerobic L-ascorbate utilization. The protein is 3-keto-L-gulonate-6-phosphate decarboxylase UlaD of Salmonella typhi.